The sequence spans 212 residues: uncharacterized protein (212 aa).

It belongs to the methyltransferase superfamily.

This is an uncharacterized protein from Synechocystis sp. (strain ATCC 27184 / PCC 6803 / Kazusa).